Here is a 305-residue protein sequence, read N- to C-terminus: tRNA pseudouridine synthase B (305 aa).

The Nucleophile role is filled by Asp48.

It belongs to the pseudouridine synthase TruB family. Type 1 subfamily.

It carries out the reaction uridine(55) in tRNA = pseudouridine(55) in tRNA. Its function is as follows. Responsible for synthesis of pseudouridine from uracil-55 in the psi GC loop of transfer RNAs. The protein is tRNA pseudouridine synthase B of Stutzerimonas stutzeri (strain A1501) (Pseudomonas stutzeri).